Consider the following 165-residue polypeptide: Transcription antitermination protein NusB (165 aa).

The tract at residues 1–27 (MISDDTDQFNPRDAKSPEIAKGKSAKR) is disordered. Residues 10–21 (NPRDAKSPEIAK) are compositionally biased toward basic and acidic residues.

It belongs to the NusB family.

Its function is as follows. Involved in transcription antitermination. Required for transcription of ribosomal RNA (rRNA) genes. Binds specifically to the boxA antiterminator sequence of the ribosomal RNA (rrn) operons. This is Transcription antitermination protein NusB from Pseudomonas syringae pv. tomato (strain ATCC BAA-871 / DC3000).